The primary structure comprises 334 residues: Small ribosomal subunit protein uS2 (334 aa).

It belongs to the universal ribosomal protein uS2 family.

The polypeptide is Small ribosomal subunit protein uS2 (Rhodopseudomonas palustris (strain BisB18)).